Consider the following 466-residue polypeptide: MSVVPVVDVLQGRAAVDSEVTVRGWVRTRRDSKAGISFLAVYDGSCFDPLQAVVNNSLPNYQDEVLHLTTGCSIEVTGVVVASPGEGQSFELQATAIKVVGWVDDPDTYPMAAKRHSIEYLREVAHLRPRTNLIGAVARVRHTLAQAIHRFYHENGFFWVSTPLITASDTEGAGEMFRVSTLDLENLPRTDKGAVDFSQDFFGKEAFLTVSGQLNGETYACALSKIYTFGPTFRAENSNTSRHLAEFWMIEPEVAFADLEDIAELAEKMLKYVFQAVLNERMDDMQFFAERVDKDAIDRLQRFVTSDFAQVDYTEAVEILIASGQTFENPVSWGIDLSSEHERYLAEKHFKAPVVVKNYPKDIKAFYMRMNDDGKTVAAMDVLAPGIGEIIGGAQREERLDVLDQRLEAMGLNKEDYWWYRDLRRYGTVPHAGFGLGFERLIAYVTGVQNVRDVIPFPRTPRNATF.

This sequence belongs to the class-II aminoacyl-tRNA synthetase family. As to quaternary structure, homodimer.

The protein localises to the cytoplasm. It carries out the reaction tRNA(Asn) + L-asparagine + ATP = L-asparaginyl-tRNA(Asn) + AMP + diphosphate + H(+). The polypeptide is Asparagine--tRNA ligase (Serratia proteamaculans (strain 568)).